Consider the following 210-residue polypeptide: Thymidylate kinase (210 aa).

Position 10–17 (10–17) interacts with ATP; it reads GPEGAGKS.

The protein belongs to the thymidylate kinase family.

It catalyses the reaction dTMP + ATP = dTDP + ADP. Phosphorylation of dTMP to form dTDP in both de novo and salvage pathways of dTTP synthesis. The protein is Thymidylate kinase of Pseudomonas putida (strain GB-1).